A 196-amino-acid polypeptide reads, in one-letter code: Large ribosomal subunit protein uL18 (196 aa).

The protein belongs to the universal ribosomal protein uL18 family. Part of the 50S ribosomal subunit. Contacts the 5S and 23S rRNAs.

Functionally, this is one of the proteins that bind and probably mediate the attachment of the 5S RNA into the large ribosomal subunit, where it forms part of the central protuberance. The sequence is that of Large ribosomal subunit protein uL18 from Saccharolobus islandicus (strain L.S.2.15 / Lassen #1) (Sulfolobus islandicus).